Reading from the N-terminus, the 1095-residue chain is Solute carrier family 12 member 1 (1095 aa).

At 1 to 173 (MSVNIPSNSV…EEDVTGVVKF (173 aa)) the chain is on the cytoplasmic side. Positions 16 to 19 (RFQV) match the RFXV motif motif. Residues 26-45 (HGSGAAMSDSTDPPHYEETS) form a disordered region. Ser57 and Ser87 each carry phosphoserine. Phosphothreonine is present on residues Thr91, Thr96, Thr101, and Thr114. Ser116 carries the phosphoserine modification. Ser126 is subject to Phosphoserine; by AMPK. Ser144 bears the Phosphoserine mark. The chain crosses the membrane as a helical span at residues 174–194 (GWVKGVLVRCMLNIWGVMLFI). Residues 195 to 197 (RLS) are Extracellular-facing. A helical membrane pass occupies residues 198–218 (WIVGEAGIGLGVIIIGLSVVV). The Cytoplasmic segment spans residues 219–255 (TTLTGISMSAICTNGVVRGGGAYYLISRSLGPEFGGS). A helical transmembrane segment spans residues 256-276 (IGLIFRFANAVRVAMYVVGFA). At 277 to 298 (ETVVDLLKESDSMMVDPTNDIR) the chain is on the extracellular side. The chain crosses the membrane as a helical span at residues 299–319 (IIGSITVVILLGISVAGMEWE). The Cytoplasmic portion of the chain corresponds to 320–323 (AKAQ). Residues 324–344 (VILLVILLIGIANFFIGTVIP) form a helical membrane-spanning segment. Residues 345-375 (SNNEKKSRGFFNYQASIFAENFGPSFTEGEG) are Extracellular-facing. A helical transmembrane segment spans residues 376–396 (FFSVFAIFFPAATGILAGANI). At 397 to 413 (SGDLEDPQDAIPRGTML) the chain is on the cytoplasmic side. Residues 414–434 (AIFITTVAYIGVAICVRACVV) form a helical membrane-spanning segment. At 435 to 546 (RDATGSMNDT…NNEPLRGYFL (112 aa)) the chain is on the extracellular side. Asn442 and Asn452 each carry an N-linked (GlcNAc...) asparagine glycan. 2 helical membrane-spanning segments follow: residues 547-567 (TFVI…APII) and 568-588 (SNFF…ASYA). Topologically, residues 589 to 605 (KSPGWRPAYGIYNMWVS) are extracellular. The helical transmembrane segment at 606 to 626 (LFGAILCCAVMFVINWWAAVI) threads the bilayer. Residues 627–1095 (TYVIELFLYI…NHKNVLTFYS (469 aa)) are Cytoplasmic-facing.

This sequence belongs to the SLC12A transporter family. In terms of assembly, when phosphorylated, interacts with PPP3CB. In terms of processing, phosphorylated at Ser-87, Thr-96 and Thr-101 by OXSR1/OSR1 and STK39/SPAK downstream of WNK kinases (WNK1, WNK2, WNK3 or WNK4), promoting its activity. Expressed predominantly in kidney (at protein level).

It localises to the apical cell membrane. The enzyme catalyses K(+)(out) + 2 chloride(out) + Na(+)(out) = K(+)(in) + 2 chloride(in) + Na(+)(in). With respect to regulation, activated following phosphorylation by OXSR1/OSR1 and STK39/SPAK downstream of WNK kinases (WNK1, WNK2, WNK3 or WNK4). Functionally, renal sodium, potassium and chloride ion cotransporter that mediates the transepithelial NaCl reabsorption in the thick ascending limb and plays an essential role in the urinary concentration and volume regulation. Electrically silent transporter system. This chain is Solute carrier family 12 member 1 (Slc12a1), found in Rattus norvegicus (Rat).